The chain runs to 356 residues: Tyrosine recombinase XerS (356 aa).

The region spanning 16 to 121 (LMPWFVLEYY…ALSSLYKYLT (106 aa)) is the Core-binding (CB) domain. A Tyr recombinase domain is found at 169–354 (KFLDYVENEY…VNDEQKNALD (186 aa)). Residues arginine 210, lysine 234, histidine 306, arginine 309, and histidine 332 contribute to the active site. Tyrosine 341 (O-(3'-phospho-DNA)-tyrosine intermediate) is an active-site residue.

The protein belongs to the 'phage' integrase family. XerS subfamily.

The protein resides in the cytoplasm. Its activity is regulated as follows. FtsK is required for recombination. Site-specific tyrosine recombinase, which acts by catalyzing the cutting and rejoining of the recombining DNA molecules. Essential to convert dimers of the bacterial chromosome into monomers to permit their segregation at cell division. The chain is Tyrosine recombinase XerS from Streptococcus thermophilus (strain CNRZ 1066).